Consider the following 2150-residue polypeptide: Hybrid signal transduction histidine kinase A (2150 aa).

Over residues 1–10 (MELKTFKDLN) the composition is skewed to basic and acidic residues. 8 disordered regions span residues 1–41 (MELK…QQQQ), 68–149 (HIPQ…YYYS), 184–267 (NSSS…HQRR), 286–323 (KNKP…GSLG), 339–359 (TEES…NCGS), 415–505 (NNNN…NSPR), 520–546 (SLTS…GRNG), and 560–733 (KPVV…NGAT). Polar residues predominate over residues 19 to 32 (PVINTGDQPNPLRT). Positions 68–81 (HIPQQLYQKQQQQQ) are enriched in low complexity. Residues 82 to 104 (HSHSYGNHSFIHNVSPTSPSYDI) are compositionally biased toward polar residues. Low complexity-rich tracts occupy residues 105–145 (NNNN…YNNN) and 184–244 (NSSS…NNNI). A compositionally biased stretch (polar residues) spans 289 to 304 (PLSSSTPSTVNTCGAV). Low complexity-rich tracts occupy residues 305-318 (NNNS…NNNS), 344-359 (GGNN…NCGS), and 415-447 (NNNN…HNIS). The span at 448–468 (PRGSNISPRSNNGGSTTISPR) shows a compositional bias: polar residues. 3 stretches are compositionally biased toward low complexity: residues 469-485 (NISN…NNNI), 520-545 (SLTS…NGRN), and 565-600 (NNGN…INNN). Residues 614-628 (SKTNSLQDFETSSMN) are compositionally biased toward polar residues. Residues 657–727 (NSNNTNSNNS…NNNNNNNNNN (71 aa)) are compositionally biased toward low complexity. Residues 772-792 (AIILGLFIVGSSISILATLVL) traverse the membrane as a helical segment. Residues 838–1082 (STSEDQFVPF…NVGGRNWMIA (245 aa)) enclose the CHASE domain. A helical membrane pass occupies residues 1098-1118 (PYAIGGVCMLLSALVSFWFAV). Positions 1139-1164 (NRKLAEKALAESQERLELAMEGSEDA) form a coiled coil. Disordered regions lie at residues 1209–1228 (LNFK…FNLF) and 1233–1252 (VDSS…GGGG). Positions 1235 to 1317 (SSSPQSITNV…SEIKKTITRE (83 aa)) constitute a PAS domain. One can recognise a PAC domain in the interval 1321-1376 (MEIECRMRKKYGGYLYIIMRGKVVSNETSFKDNSLRMAGTLRDMTSRKDMQRLILE). The Histidine kinase domain maps to 1393 to 1620 (TVSHEVRTPL…KFKCIIPFLL (228 aa)). H1396 is subject to Phosphohistidine; by autocatalysis. Disordered stretches follow at residues 1874 to 1893 (GGGS…NNNF), 1933 to 1952 (HGNQ…NNSS), and 1962 to 2017 (QNNN…DTPV). Composition is skewed to low complexity over residues 1878 to 1893 (NTMN…NNNF), 1935 to 1952 (NQQQ…NNSS), and 1962 to 2002 (QNNN…TPTL). The Response regulatory domain occupies 2026 to 2146 (KALIVEDNEL…TLKDALAKWG (121 aa)). 4-aspartylphosphate is present on D2076.

As to quaternary structure, interacts with SDF-2, an acbA peptide involved in sporulation.

It is found in the cell membrane. It carries out the reaction ATP + protein L-histidine = ADP + protein N-phospho-L-histidine.. Functionally, acts as a receptor histidine kinase for the cytokinin SDF-2 in a signal transduction pathway that regulates prestalk gene expression and controls terminal differentiation of prespore cells. Binding of SDF-2 to this protein inhibits phosphorelay and induces rapid sporulation. This protein undergoes an ATP-dependent autophosphorylation at a conserved histidine residue in the kinase core, and a phosphoryl group is then transferred to a conserved aspartate residue in the receiver domain. The chain is Hybrid signal transduction histidine kinase A (dhkA) from Dictyostelium discoideum (Social amoeba).